Here is an 832-residue protein sequence, read N- to C-terminus: Histone acetyltransferase KAT2B (832 aa).

Gly residues predominate over residues 1 to 22; the sequence is MSEAGGAGPGGCGAGAGAGAGP. Disordered stretches follow at residues 1-54 and 395-436; these read MSEA…ACGP and SYNS…DSHV. Residues 24–39 are compositionally biased toward pro residues; sequence ALPPQPAALPPAPPQG. A compositionally biased stretch (low complexity) spans 40–54; sequence SPCAAAAGGSGACGP. Residues 395–413 show a composition bias toward polar residues; the sequence is SYNSTSSSLEQPNAGSSSP. Residues 425 to 436 are compositionally biased toward basic and acidic residues; the sequence is PGEKRKMTDSHV. Positions 503-651 constitute an N-acetyltransferase domain; that stretch reads LNQKPNKKIL…GATLMGCELN (149 aa). Glu570 functions as the Proton donor/acceptor in the catalytic mechanism. Acetyl-CoA-binding positions include 574–576, 581–587, and 612–615; these read CAV, QVKGYGT, and YAIG. The interval 706-725 is disordered; the sequence is IRETGWKPSGKEKSKEPRDP. Positions 714 to 725 are enriched in basic and acidic residues; the sequence is SGKEKSKEPRDP. Positions 723–827 constitute a Bromo domain; sequence RDPDQLYSTL…KFFFSKIKEA (105 aa).

This sequence belongs to the acetyltransferase family. GCN5 subfamily. As to quaternary structure, interacts with SIRT1. Interacts (unsumoylated form) with NR2C1; the interaction promotes transactivation activity. Interacts with EP300, CREBBP and DDX17. Interacts with NCOA1 and NCOA3. Component of a large chromatin remodeling complex, at least composed of MYSM1, KAT2B/PCAF, RBM10 and KIF11/TRIP5. Interacts with NR2C2 (hypophosphorylated and unsumoylated form); the interaction promotes the transactivation activity of NR2C2. Interacts with KLF1; the interaction does not acetylate KLF1 and there is no enhancement of its transactivational activity. Interacts with NFE4. Interacts with MECOM. Interacts with E2F1; the interaction acetylates E2F1 augmenting its DNA-binding and transcriptional activity. Interacts with NPAS2, BMAL1 and CLOCK. Interacts with BCAS3. Interacts with CEBPB. Interacts with NR4A3. Interacts with NFATC2. Interacts with TBX5. Interacts with PLK4. Interacts with RB1; this interaction leads to RB1 acetylation. Interacts with VRK1. In terms of assembly, (Microbial infection) Interacts with and acetylates HIV-1 Tat. (Microbial infection) Interacts with HTLV-1 Tax. As to expression, ubiquitously expressed but most abundant in heart and skeletal muscle. Also expressed in the skin, in keratinocytes (at protein level).

It is found in the nucleus. The protein resides in the cytoplasm. The protein localises to the cytoskeleton. Its subcellular location is the microtubule organizing center. It localises to the centrosome. The catalysed reaction is L-lysyl-[histone] + acetyl-CoA = N(6)-acetyl-L-lysyl-[histone] + CoA + H(+). The enzyme catalyses L-lysyl-[protein] + acetyl-CoA = N(6)-acetyl-L-lysyl-[protein] + CoA + H(+). It catalyses the reaction spermidine + acetyl-CoA = N(8)-acetylspermidine + CoA + H(+). With respect to regulation, activated in vitro by very low concentrations of spermidine, but inhibited at spermidine concentrations higher than 4 uM. The activating effect of low spermidine concentrations may be mediated by N(8)-acetylspermidine produced by KAT2B/P/CAF itself acting as a positive feedback loop. Functionally, functions as a histone acetyltransferase (HAT) to promote transcriptional activation. Has significant histone acetyltransferase activity with core histones (H3 and H4), and also with nucleosome core particles. Has a a strong preference for acetylation of H3 at 'Lys-9' (H3K9ac). Also acetylates non-histone proteins, such as ACLY, MAPRE1/EB1, PLK4, RRP9/U3-55K and TBX5. Inhibits cell-cycle progression and counteracts the mitogenic activity of the adenoviral oncoprotein E1A. Acts as a circadian transcriptional coactivator which enhances the activity of the circadian transcriptional activators: NPAS2-BMAL1 and CLOCK-BMAL1 heterodimers. Involved in heart and limb development by mediating acetylation of TBX5, acetylation regulating nucleocytoplasmic shuttling of TBX5. Acts as a negative regulator of centrosome amplification by mediating acetylation of PLK4. Acetylates RRP9/U3-55K, a core subunit of the U3 snoRNP complex, impairing pre-rRNA processing. Acetylates MAPRE1/EB1, promoting dynamic kinetochore-microtubule interactions in early mitosis. Also acetylates spermidine. (Microbial infection) In case of HIV-1 infection, it is recruited by the viral protein Tat. Regulates Tat's transactivating activity and may help inducing chromatin remodeling of proviral genes. The sequence is that of Histone acetyltransferase KAT2B from Homo sapiens (Human).